The chain runs to 369 residues: 3-isopropylmalate dehydrogenase (369 aa).

NAD(+) is bound at residue Gly77–Glu90. Substrate-binding residues include Arg97, Arg107, Arg135, and Asp226. Asp226, Asp250, and Asp254 together coordinate Mg(2+). An NAD(+)-binding site is contributed by Gly289–Asn301.

Belongs to the isocitrate and isopropylmalate dehydrogenases family. LeuB type 1 subfamily. Homodimer. Mg(2+) serves as cofactor. Mn(2+) is required as a cofactor.

It localises to the cytoplasm. The enzyme catalyses (2R,3S)-3-isopropylmalate + NAD(+) = 4-methyl-2-oxopentanoate + CO2 + NADH. It participates in amino-acid biosynthesis; L-leucine biosynthesis; L-leucine from 3-methyl-2-oxobutanoate: step 3/4. Functionally, catalyzes the oxidation of 3-carboxy-2-hydroxy-4-methylpentanoate (3-isopropylmalate) to 3-carboxy-4-methyl-2-oxopentanoate. The product decarboxylates to 4-methyl-2 oxopentanoate. The polypeptide is 3-isopropylmalate dehydrogenase (Cereibacter sphaeroides (strain ATCC 17023 / DSM 158 / JCM 6121 / CCUG 31486 / LMG 2827 / NBRC 12203 / NCIMB 8253 / ATH 2.4.1.) (Rhodobacter sphaeroides)).